A 483-amino-acid chain; its full sequence is Isocitrate dehydrogenase [NADP] (483 aa).

NADP(+) is bound at residue Thr74. Ser83, Asn85, Arg89, Arg99, and Arg121 together coordinate D-threo-isocitrate. Residue Asp232 coordinates Mg(2+). NADP(+)-binding positions include 264-270 (HGSAPDI) and Asn277.

The protein belongs to the isocitrate and isopropylmalate dehydrogenases family. As to quaternary structure, homodimer. Mg(2+) is required as a cofactor. The cofactor is Mn(2+).

The catalysed reaction is D-threo-isocitrate + NADP(+) = 2-oxoglutarate + CO2 + NADPH. In terms of biological role, catalyzes the oxidative decarboxylation of isocitrate to 2-oxoglutarate and carbon dioxide with the concomitant reduction of NADP(+). The polypeptide is Isocitrate dehydrogenase [NADP] (icd) (Rickettsia felis (strain ATCC VR-1525 / URRWXCal2) (Rickettsia azadi)).